The sequence spans 402 residues: Beta sliding clamp (402 aa).

The protein belongs to the beta sliding clamp family. As to quaternary structure, forms a ring-shaped head-to-tail homodimer around DNA which binds and tethers DNA polymerases and other proteins to the DNA. The DNA replisome complex has a single clamp-loading complex (3 tau and 1 each of delta, delta', psi and chi subunits) which binds 3 Pol III cores (1 core on the leading strand and 2 on the lagging strand) each with a beta sliding clamp dimer. Additional proteins in the replisome are other copies of gamma, psi and chi, Ssb, DNA helicase and RNA primase.

Its subcellular location is the cytoplasm. Confers DNA tethering and processivity to DNA polymerases and other proteins. Acts as a clamp, forming a ring around DNA (a reaction catalyzed by the clamp-loading complex) which diffuses in an ATP-independent manner freely and bidirectionally along dsDNA. Initially characterized for its ability to contact the catalytic subunit of DNA polymerase III (Pol III), a complex, multichain enzyme responsible for most of the replicative synthesis in bacteria; Pol III exhibits 3'-5' exonuclease proofreading activity. The beta chain is required for initiation of replication as well as for processivity of DNA replication. This Mycobacterium tuberculosis (strain CDC 1551 / Oshkosh) protein is Beta sliding clamp (dnaN).